The sequence spans 713 residues: Protein-glucosylgalactosylhydroxylysine glucosidase (713 aa).

A signal peptide spans methionine 1–alanine 21. N-linked (GlcNAc...) asparagine glycosylation is found at asparagine 104, asparagine 160, asparagine 171, asparagine 186, and asparagine 283. Tryptophan 317 to aspartate 318 serves as a coordination point for substrate. A glycan (N-linked (GlcNAc...) asparagine) is linked at asparagine 361. Glutamate 451 functions as the Proton donor in the catalytic mechanism. N-linked (GlcNAc...) asparagine glycosylation is found at asparagine 457 and asparagine 481. Substrate is bound at residue lysine 521 to glutamine 522. N-linked (GlcNAc...) asparagine glycans are attached at residues asparagine 535, asparagine 576, and asparagine 662.

This sequence belongs to the glycosyl hydrolase 65 family.

Its subcellular location is the secreted. The enzyme catalyses (5R)-5-O-[alpha-D-glucosyl-(1-&gt;2)-beta-D-galactosyl]-5-hydroxy-L-lysyl-[collagen] + H2O = (5R)-5-O-(beta-D-galactosyl)-5-hydroxy-L-lysyl-[collagen] + D-glucose. In terms of biological role, catalyzes the hydrolysis of glucose from the disaccharide unit linked to hydroxylysine residues of collagen and collagen-like proteins. The protein is Protein-glucosylgalactosylhydroxylysine glucosidase of Dictyostelium discoideum (Social amoeba).